An 83-amino-acid chain; its full sequence is Putative membrane protein insertion efficiency factor (83 aa).

Positions G64–H83 are disordered.

This sequence belongs to the UPF0161 family.

It localises to the cell membrane. In terms of biological role, could be involved in insertion of integral membrane proteins into the membrane. In Staphylococcus epidermidis (strain ATCC 12228 / FDA PCI 1200), this protein is Putative membrane protein insertion efficiency factor.